The following is a 231-amino-acid chain: Class A basic helix-loop-helix protein 9 (231 aa).

The 53-residue stretch at 61-113 (ARRMAANVRERKRILDYNEAFNALRRALQHDLGGKRLSKIATLRRAIHRITAL) folds into the bHLH domain. The disordered stretch occupies residues 135–168 (QAAQGSSTGNSSFSVPRSAPSPIAPSLTRRDIAS). Over residues 137-149 (AQGSSTGNSSFSV) the composition is skewed to polar residues.

As to quaternary structure, heterodimer. Efficient DNA binding requires dimerization with another bHLH protein. Interacts with TCF3, TCF4, and TCF12.

The protein localises to the nucleus. Functionally, transcription factor, which play a role in limb development. Is an essential player in the regulatory network governing transcription of genes implicated in limb morphogenesis. The polypeptide is Class A basic helix-loop-helix protein 9 (Bhlha9) (Mus musculus (Mouse)).